The following is a 172-amino-acid chain: Capsid protein (172 aa).

The tract at residues 1-26 is disordered; sequence MASKWNWSGTKGRRTPRRPYGRPYKS. Residues 11 to 20 are compositionally biased toward basic residues; sequence KGRRTPRRPY.

It belongs to the nanoviridae capsid protein family.

The protein resides in the virion. The protein is Capsid protein (DNA-S) of Faba bean necrotic yellows virus (isolate Syrian SV292-88) (FBNYV).